A 459-amino-acid polypeptide reads, in one-letter code: Phosphomethylpyrimidine synthase (459 aa).

Residues asparagine 80, methionine 109, tyrosine 139, histidine 175, 195–197, 236–239, and glutamate 275 contribute to the substrate site; these read SRG and DSLR. Histidine 279 provides a ligand contact to Zn(2+). Substrate is bound at residue tyrosine 302. Histidine 343 lines the Zn(2+) pocket. Residues cysteine 423, cysteine 426, and cysteine 431 each coordinate [4Fe-4S] cluster.

The protein belongs to the ThiC family. Requires [4Fe-4S] cluster as cofactor.

The enzyme catalyses 5-amino-1-(5-phospho-beta-D-ribosyl)imidazole + S-adenosyl-L-methionine = 4-amino-2-methyl-5-(phosphooxymethyl)pyrimidine + CO + 5'-deoxyadenosine + formate + L-methionine + 3 H(+). It participates in cofactor biosynthesis; thiamine diphosphate biosynthesis. In terms of biological role, catalyzes the synthesis of the hydroxymethylpyrimidine phosphate (HMP-P) moiety of thiamine from aminoimidazole ribotide (AIR) in a radical S-adenosyl-L-methionine (SAM)-dependent reaction. The protein is Phosphomethylpyrimidine synthase of Prochlorococcus marinus (strain MIT 9303).